A 500-amino-acid polypeptide reads, in one-letter code: Phenylalanine--tRNA ligase alpha subunit (500 aa).

L-phenylalanine is bound by residues T343, Q382–D384, and F423. E425 contributes to the Mg(2+) binding site. L-phenylalanine is bound at residue F448.

This sequence belongs to the class-II aminoacyl-tRNA synthetase family. Phe-tRNA synthetase alpha subunit type 2 subfamily. As to quaternary structure, tetramer of two alpha and two beta subunits. Mg(2+) is required as a cofactor.

The protein resides in the cytoplasm. The enzyme catalyses tRNA(Phe) + L-phenylalanine + ATP = L-phenylalanyl-tRNA(Phe) + AMP + diphosphate + H(+). The sequence is that of Phenylalanine--tRNA ligase alpha subunit from Thermococcus onnurineus (strain NA1).